Consider the following 221-residue polypeptide: MSRIEAVFFDCDGTLVDSEVICSRAYVTMFQEFGITLDPEEVFKRFKGVKLYEIIDIVSLEHGVTLAKTEAEHVYRAEVARLFDSELEAIEGAGALLSAITAPMCVVSNGPNNKMQHSMGKLNMLHYFPDKLFSGYDIQRWKPDPALMFHAAKAMNVNVENCILVDDSVAGAQSGIDAGMEVFYFCADPHNKPIVHPKVTTFTHLSQLPELWKARGWDITA.

The active-site Nucleophile is the aspartate 10. Mg(2+) contacts are provided by aspartate 10, aspartate 12, and aspartate 167. Substrate is bound at residue 10 to 12; sequence DCD.

The protein belongs to the HAD-like hydrolase superfamily. CbbY/CbbZ/Gph/YieH family. Mg(2+) serves as cofactor. Requires Mn(2+) as cofactor. Co(2+) is required as a cofactor. It depends on Zn(2+) as a cofactor.

Functionally, catalyzes strongly the dephosphorylation of 6-phosphogluconate (6P-Glu) and slightly the dephosphorylation of dihydroxyacetone phosphate (DHAP) and phosphoenolpyruvate (PEP). Also hydrolyzes both purines (GMP and IMP) and pyrimidines as secondary substrates. The sequence is that of 6-phosphogluconate phosphatase (yieH) from Escherichia coli (strain K12).